Reading from the N-terminus, the 203-residue chain is Holliday junction branch migration complex subunit RuvA (203 aa).

The interval 1–64 is domain I; that stretch reads MIGRLRGIII…EDAQLLYGFN (64 aa). The domain II stretch occupies residues 65-142; it reads NKQERTLFKE…KGLHGDLFTP (78 aa). Positions 143–154 are flexible linker; sequence AADLVLTSPASP. The tract at residues 155-203 is domain III; sequence ATDDAEQEAVAALVALGYKPQEASRMVSKIARPDTSSETLIREALRAAL.

This sequence belongs to the RuvA family. As to quaternary structure, homotetramer. Forms an RuvA(8)-RuvB(12)-Holliday junction (HJ) complex. HJ DNA is sandwiched between 2 RuvA tetramers; dsDNA enters through RuvA and exits via RuvB. An RuvB hexamer assembles on each DNA strand where it exits the tetramer. Each RuvB hexamer is contacted by two RuvA subunits (via domain III) on 2 adjacent RuvB subunits; this complex drives branch migration. In the full resolvosome a probable DNA-RuvA(4)-RuvB(12)-RuvC(2) complex forms which resolves the HJ.

The protein localises to the cytoplasm. Functionally, the RuvA-RuvB-RuvC complex processes Holliday junction (HJ) DNA during genetic recombination and DNA repair, while the RuvA-RuvB complex plays an important role in the rescue of blocked DNA replication forks via replication fork reversal (RFR). RuvA specifically binds to HJ cruciform DNA, conferring on it an open structure. The RuvB hexamer acts as an ATP-dependent pump, pulling dsDNA into and through the RuvAB complex. HJ branch migration allows RuvC to scan DNA until it finds its consensus sequence, where it cleaves and resolves the cruciform DNA. In Shigella flexneri serotype 5b (strain 8401), this protein is Holliday junction branch migration complex subunit RuvA.